Reading from the N-terminus, the 157-residue chain is Vitamin K-dependent protein C (157 aa).

The 157-residue stretch at 1–157 folds into the Peptidase S1 domain; the sequence is ENGEVDLDIQ…GCGRLHNYGV (157 aa). N17 carries N-linked (GlcNAc...) asparagine glycosylation. The active-site Charge relay system is the D26. The N-linked (GlcNAc...) asparagine glycan is linked to N78. Intrachain disulfides connect C96–C110 and C121–C149. S125 acts as the Charge relay system in catalysis.

The protein belongs to the peptidase S1 family. Plasma; synthesized in the liver.

The protein localises to the secreted. Its subcellular location is the golgi apparatus. It localises to the endoplasmic reticulum. It catalyses the reaction Degradation of blood coagulation factors Va and VIIIa.. Its function is as follows. Protein C is a vitamin K-dependent serine protease that regulates blood coagulation by inactivating factors Va and VIIIa in the presence of calcium ions and phospholipids. Exerts a protective effect on the endothelial cell barrier function. The polypeptide is Vitamin K-dependent protein C (PROC) (Equus caballus (Horse)).